The chain runs to 92 residues: YcgL domain-containing protein VC0395_A1544/VC395_2072 (92 aa).

The YcgL domain maps to 1 to 84 (MLCSIYKSPK…PPENLLEQHK (84 aa)). The disordered stretch occupies residues 71-92 (QLPPPPENLLEQHKERKARQTP).

This chain is YcgL domain-containing protein VC0395_A1544/VC395_2072, found in Vibrio cholerae serotype O1 (strain ATCC 39541 / Classical Ogawa 395 / O395).